Here is an 85-residue protein sequence, read N- to C-terminus: UPF0298 protein SUB0431 (85 aa).

Belongs to the UPF0298 family.

Its subcellular location is the cytoplasm. This is UPF0298 protein SUB0431 from Streptococcus uberis (strain ATCC BAA-854 / 0140J).